Here is a 259-residue protein sequence, read N- to C-terminus: Ribonuclease HII (259 aa).

Positions 70-258 (TLIAGIDEVG…VKSLVLGKKE (189 aa)) constitute an RNase H type-2 domain. A divalent metal cation-binding residues include Asp76, Glu77, and Asp168.

Belongs to the RNase HII family. Mn(2+) serves as cofactor. Mg(2+) is required as a cofactor.

The protein localises to the cytoplasm. It carries out the reaction Endonucleolytic cleavage to 5'-phosphomonoester.. Functionally, endonuclease that specifically degrades the RNA of RNA-DNA hybrids. This Streptococcus pneumoniae (strain 70585) protein is Ribonuclease HII.